Reading from the N-terminus, the 512-residue chain is Maturase K (512 aa).

This sequence belongs to the intron maturase 2 family. MatK subfamily.

Its subcellular location is the plastid. It is found in the chloroplast. Functionally, usually encoded in the trnK tRNA gene intron. Probably assists in splicing its own and other chloroplast group II introns. This chain is Maturase K, found in Dalea wrightii (Wright's prairie clover).